The following is a 417-amino-acid chain: Carboxypeptidase A2 (417 aa).

Positions 1 to 16 (MRLTLLLAALLGYIYC) are cleaved as a signal peptide. Positions 17–112 (QETFVGDQVL…EMLFNQQRER (96 aa)) are cleaved as a propeptide — activation peptide. Residues 120–412 (AYHTLEEIYQ…LGLKTIMEHV (293 aa)) enclose the Peptidase M14 domain. Zn(2+)-binding residues include histidine 177 and glutamate 180. Substrate contacts are provided by residues 177–180 (HARE), arginine 235, and 252–253 (NR). Cysteine 246 and cysteine 269 are oxidised to a cystine. A Zn(2+)-binding site is contributed by histidine 304. 305–306 (SY) contacts substrate. Cysteine 318 and cysteine 352 are joined by a disulfide. Tyrosine 356 contacts substrate. The Proton donor/acceptor role is filled by glutamate 378.

Belongs to the peptidase M14 family. Zn(2+) is required as a cofactor.

The protein resides in the secreted. The catalysed reaction is Similar to that of carboxypeptidase A (EC 3.4.17.1), but with a preference for bulkier C-terminal residues.. Its function is as follows. Carboxypeptidase that catalyzes the release of a C-terminal amino acid, with a preference for large aromatic C-terminal residues. This Rattus norvegicus (Rat) protein is Carboxypeptidase A2 (Cpa2).